Consider the following 427-residue polypeptide: tRNA(Ile)-lysidine synthase (427 aa).

27 to 32 (SGGVDS) is an ATP binding site.

Belongs to the tRNA(Ile)-lysidine synthase family.

The protein localises to the cytoplasm. It carries out the reaction cytidine(34) in tRNA(Ile2) + L-lysine + ATP = lysidine(34) in tRNA(Ile2) + AMP + diphosphate + H(+). Functionally, ligates lysine onto the cytidine present at position 34 of the AUA codon-specific tRNA(Ile) that contains the anticodon CAU, in an ATP-dependent manner. Cytidine is converted to lysidine, thus changing the amino acid specificity of the tRNA from methionine to isoleucine. In Streptococcus equi subsp. equi (strain 4047), this protein is tRNA(Ile)-lysidine synthase.